The sequence spans 237 residues: Orotidine 5'-phosphate decarboxylase (237 aa).

Substrate contacts are provided by residues aspartate 10, lysine 33, aspartate 60–threonine 69, threonine 123, arginine 185, glutamine 194, glycine 214, and arginine 215. Lysine 62 acts as the Proton donor in catalysis.

The protein belongs to the OMP decarboxylase family. Type 1 subfamily. As to quaternary structure, homodimer.

It carries out the reaction orotidine 5'-phosphate + H(+) = UMP + CO2. The protein operates within pyrimidine metabolism; UMP biosynthesis via de novo pathway; UMP from orotate: step 2/2. Functionally, catalyzes the decarboxylation of orotidine 5'-monophosphate (OMP) to uridine 5'-monophosphate (UMP). The protein is Orotidine 5'-phosphate decarboxylase of Enterococcus faecalis (strain ATCC 700802 / V583).